We begin with the raw amino-acid sequence, 348 residues long: tRNA N6-adenosine threonylcarbamoyltransferase (348 aa).

2 residues coordinate Fe cation: histidine 120 and histidine 124. Residues 143 to 147 (LVSGG), aspartate 176, glycine 189, and asparagine 282 contribute to the substrate site. Fe cation is bound at residue aspartate 310.

Belongs to the KAE1 / TsaD family. Fe(2+) is required as a cofactor.

It is found in the cytoplasm. The catalysed reaction is L-threonylcarbamoyladenylate + adenosine(37) in tRNA = N(6)-L-threonylcarbamoyladenosine(37) in tRNA + AMP + H(+). Its function is as follows. Required for the formation of a threonylcarbamoyl group on adenosine at position 37 (t(6)A37) in tRNAs that read codons beginning with adenine. Is involved in the transfer of the threonylcarbamoyl moiety of threonylcarbamoyl-AMP (TC-AMP) to the N6 group of A37, together with TsaE and TsaB. TsaD likely plays a direct catalytic role in this reaction. In Paracidovorax citrulli (strain AAC00-1) (Acidovorax citrulli), this protein is tRNA N6-adenosine threonylcarbamoyltransferase.